Here is a 108-residue protein sequence, read N- to C-terminus: Cytochrome c (108 aa).

The heme c site is built by Cys-19, Cys-22, His-23, and Met-85.

It belongs to the cytochrome c family. Binds 1 heme c group covalently per subunit.

Its subcellular location is the mitochondrion intermembrane space. Its function is as follows. Electron carrier protein. The oxidized form of the cytochrome c heme group can accept an electron from the heme group of the cytochrome c1 subunit of cytochrome reductase. Cytochrome c then transfers this electron to the cytochrome oxidase complex, the final protein carrier in the mitochondrial electron-transport chain. The sequence is that of Cytochrome c from Cochliobolus lunatus (Filamentous fungus).